The sequence spans 240 residues: UDP-2,3-diacylglucosamine hydrolase (240 aa).

Residues D7, H9, D40, N78, and H113 each contribute to the Mn(2+) site. Substrate is bound at residue 78–79; the sequence is NR. D121, S159, T163, K166, and H194 together coordinate substrate. Mn(2+) contacts are provided by H194 and H196.

Belongs to the LpxH family. Requires Mn(2+) as cofactor.

It is found in the cell inner membrane. It catalyses the reaction UDP-2-N,3-O-bis[(3R)-3-hydroxytetradecanoyl]-alpha-D-glucosamine + H2O = 2-N,3-O-bis[(3R)-3-hydroxytetradecanoyl]-alpha-D-glucosaminyl 1-phosphate + UMP + 2 H(+). It participates in glycolipid biosynthesis; lipid IV(A) biosynthesis; lipid IV(A) from (3R)-3-hydroxytetradecanoyl-[acyl-carrier-protein] and UDP-N-acetyl-alpha-D-glucosamine: step 4/6. Hydrolyzes the pyrophosphate bond of UDP-2,3-diacylglucosamine to yield 2,3-diacylglucosamine 1-phosphate (lipid X) and UMP by catalyzing the attack of water at the alpha-P atom. Involved in the biosynthesis of lipid A, a phosphorylated glycolipid that anchors the lipopolysaccharide to the outer membrane of the cell. The protein is UDP-2,3-diacylglucosamine hydrolase of Pseudomonas entomophila (strain L48).